A 366-amino-acid chain; its full sequence is Cobalt-precorrin-5B C(1)-methyltransferase (366 aa).

It belongs to the CbiD family.

The catalysed reaction is Co-precorrin-5B + S-adenosyl-L-methionine = Co-precorrin-6A + S-adenosyl-L-homocysteine. It functions in the pathway cofactor biosynthesis; adenosylcobalamin biosynthesis; cob(II)yrinate a,c-diamide from sirohydrochlorin (anaerobic route): step 6/10. Its function is as follows. Catalyzes the methylation of C-1 in cobalt-precorrin-5B to form cobalt-precorrin-6A. The chain is Cobalt-precorrin-5B C(1)-methyltransferase from Methanococcus maripaludis (strain C7 / ATCC BAA-1331).